A 463-amino-acid chain; its full sequence is ATP synthase subunit beta (463 aa).

Position 152-159 (152-159 (GGAGVGKT)) interacts with ATP.

The protein belongs to the ATPase alpha/beta chains family. In terms of assembly, F-type ATPases have 2 components, CF(1) - the catalytic core - and CF(0) - the membrane proton channel. CF(1) has five subunits: alpha(3), beta(3), gamma(1), delta(1), epsilon(1). CF(0) has three main subunits: a(1), b(2) and c(9-12). The alpha and beta chains form an alternating ring which encloses part of the gamma chain. CF(1) is attached to CF(0) by a central stalk formed by the gamma and epsilon chains, while a peripheral stalk is formed by the delta and b chains.

The protein localises to the cell inner membrane. The enzyme catalyses ATP + H2O + 4 H(+)(in) = ADP + phosphate + 5 H(+)(out). In terms of biological role, produces ATP from ADP in the presence of a proton gradient across the membrane. The catalytic sites are hosted primarily by the beta subunits. The protein is ATP synthase subunit beta of Shewanella putrefaciens (strain CN-32 / ATCC BAA-453).